The sequence spans 275 residues: Expansin-B6 (275 aa).

Residues 1 to 25 (MAARMGSKVAAILAILSVLVVHGSC) form the signal peptide. N-linked (GlcNAc...) asparagine glycosylation occurs at N33. The Expansin-like EG45 domain maps to 64-170 (GGACGFKNVN…RRVPCNYPGL (107 aa)). Cystine bridges form between C67–C95, C98–C165, and C103–C109. In terms of domain architecture, Expansin-like CBD spans 183–270 (VYFAVLVEYE…NWSPNSNYRS (88 aa)).

Belongs to the expansin family. Expansin B subfamily. Expressed in internodes.

It is found in the secreted. Its subcellular location is the cell wall. The protein resides in the membrane. In terms of biological role, may cause loosening and extension of plant cell walls by disrupting non-covalent bonding between cellulose microfibrils and matrix glucans. No enzymatic activity has been found. May be required for rapid internodal elongation in deepwater rice during submergence. This Oryza sativa subsp. japonica (Rice) protein is Expansin-B6 (EXPB6).